The following is a 161-amino-acid chain: Allophycocyanin alpha chain (161 aa).

Asn71 bears the N4-methylasparagine mark. Cys81 contacts (2R,3E)-phycocyanobilin.

It belongs to the phycobiliprotein family. Heterodimer of an alpha and a beta chain. Post-translationally, contains one covalently linked phycocyanobilin chromophore.

It localises to the plastid. It is found in the cyanelle thylakoid membrane. In terms of biological role, light-harvesting photosynthetic bile pigment-protein from the phycobiliprotein complex. Allophycocyanin has a maximum absorption at approximately 650 nanometers. This is Allophycocyanin alpha chain (apcA) from Cyanophora paradoxa.